We begin with the raw amino-acid sequence, 318 residues long: Transaldolase (318 aa).

Residue Lys132 is the Schiff-base intermediate with substrate of the active site.

Belongs to the transaldolase family. Type 1 subfamily. Homodimer.

It is found in the cytoplasm. The catalysed reaction is D-sedoheptulose 7-phosphate + D-glyceraldehyde 3-phosphate = D-erythrose 4-phosphate + beta-D-fructose 6-phosphate. It functions in the pathway carbohydrate degradation; pentose phosphate pathway; D-glyceraldehyde 3-phosphate and beta-D-fructose 6-phosphate from D-ribose 5-phosphate and D-xylulose 5-phosphate (non-oxidative stage): step 2/3. Functionally, transaldolase is important for the balance of metabolites in the pentose-phosphate pathway. This chain is Transaldolase, found in Allorhizobium ampelinum (strain ATCC BAA-846 / DSM 112012 / S4) (Agrobacterium vitis (strain S4)).